Here is a 271-residue protein sequence, read N- to C-terminus: 3-methyl-2-oxobutanoate hydroxymethyltransferase 1 (271 aa).

2 residues coordinate Mg(2+): D53 and D92. 3-methyl-2-oxobutanoate is bound by residues 53 to 54 (DS), D92, and K120. Mg(2+) is bound at residue E122. E189 serves as the catalytic Proton acceptor.

It belongs to the PanB family. In terms of assembly, homodecamer; pentamer of dimers. It depends on Mg(2+) as a cofactor.

Its subcellular location is the cytoplasm. It catalyses the reaction 3-methyl-2-oxobutanoate + (6R)-5,10-methylene-5,6,7,8-tetrahydrofolate + H2O = 2-dehydropantoate + (6S)-5,6,7,8-tetrahydrofolate. Its pathway is cofactor biosynthesis; (R)-pantothenate biosynthesis; (R)-pantoate from 3-methyl-2-oxobutanoate: step 1/2. Catalyzes the reversible reaction in which hydroxymethyl group from 5,10-methylenetetrahydrofolate is transferred onto alpha-ketoisovalerate to form ketopantoate. This Burkholderia cenocepacia (strain HI2424) protein is 3-methyl-2-oxobutanoate hydroxymethyltransferase 1.